The chain runs to 332 residues: NADH-quinone oxidoreductase subunit H (332 aa).

The next 9 helical transmembrane spans lie at 4–24 (FAFFALEALIKCIIIIAIFAS), 44–64 (IGPDMVGPFGLIQLVADMIKL), 78–98 (FIFAIAPLISAICAFVSLAAI), 120–140 (VALLFVIGTSGLCFYAVFLGG), 165–185 (VGALALIAIVMLVGSFSLVDI), 194–214 (FSWLIFKQPLAFVLFIIALFI), 255–275 (IAGAILVTLLFLGGFNSFWII), 279–299 (IMMIVKSSFIFFWYFWARAAF), and 312–332 (YLILIPLAVLNLLITALAVLL).

This sequence belongs to the complex I subunit 1 family. As to quaternary structure, NDH-1 is composed of 14 different subunits. Subunits NuoA, H, J, K, L, M, N constitute the membrane sector of the complex.

It is found in the cell inner membrane. The enzyme catalyses a quinone + NADH + 5 H(+)(in) = a quinol + NAD(+) + 4 H(+)(out). In terms of biological role, NDH-1 shuttles electrons from NADH, via FMN and iron-sulfur (Fe-S) centers, to quinones in the respiratory chain. The immediate electron acceptor for the enzyme in this species is believed to be ubiquinone. Couples the redox reaction to proton translocation (for every two electrons transferred, four hydrogen ions are translocated across the cytoplasmic membrane), and thus conserves the redox energy in a proton gradient. This subunit may bind ubiquinone. The sequence is that of NADH-quinone oxidoreductase subunit H from Campylobacter jejuni (strain RM1221).